We begin with the raw amino-acid sequence, 556 residues long: 2-succinyl-5-enolpyruvyl-6-hydroxy-3-cyclohexene-1-carboxylate synthase (556 aa).

It belongs to the TPP enzyme family. MenD subfamily. In terms of assembly, homodimer. Mg(2+) is required as a cofactor. The cofactor is Mn(2+). It depends on thiamine diphosphate as a cofactor.

It carries out the reaction isochorismate + 2-oxoglutarate + H(+) = 5-enolpyruvoyl-6-hydroxy-2-succinyl-cyclohex-3-ene-1-carboxylate + CO2. It functions in the pathway quinol/quinone metabolism; 1,4-dihydroxy-2-naphthoate biosynthesis; 1,4-dihydroxy-2-naphthoate from chorismate: step 2/7. Its pathway is quinol/quinone metabolism; menaquinone biosynthesis. In terms of biological role, catalyzes the thiamine diphosphate-dependent decarboxylation of 2-oxoglutarate and the subsequent addition of the resulting succinic semialdehyde-thiamine pyrophosphate anion to isochorismate to yield 2-succinyl-5-enolpyruvyl-6-hydroxy-3-cyclohexene-1-carboxylate (SEPHCHC). The protein is 2-succinyl-5-enolpyruvyl-6-hydroxy-3-cyclohexene-1-carboxylate synthase of Salmonella arizonae (strain ATCC BAA-731 / CDC346-86 / RSK2980).